Reading from the N-terminus, the 141-residue chain is Large ribosomal subunit protein uL11 (141 aa).

It belongs to the universal ribosomal protein uL11 family. Part of the ribosomal stalk of the 50S ribosomal subunit. Interacts with L10 and the large rRNA to form the base of the stalk. L10 forms an elongated spine to which 2 L12 dimers bind in a sequential fashion forming a pentameric L10(L12)2(L12)2 complex. In stalled/isolated 50S subunits interacts with RqcH. Post-translationally, one or more lysine residues are methylated.

Forms part of the ribosomal stalk which helps the ribosome interact with GTP-bound translation factors. Required to recruit RqcH, which is part of the ribosome quality control system (RQC), to stalled 50S ribosomal subunits. The chain is Large ribosomal subunit protein uL11 from Bacillus subtilis (strain 168).